The following is a 185-amino-acid chain: Peptidyl-tRNA hydrolase (185 aa).

Tyr14 is a tRNA binding site. Catalysis depends on His19, which acts as the Proton acceptor. Positions 64, 66, and 112 each coordinate tRNA.

The protein belongs to the PTH family. As to quaternary structure, monomer.

It is found in the cytoplasm. The enzyme catalyses an N-acyl-L-alpha-aminoacyl-tRNA + H2O = an N-acyl-L-amino acid + a tRNA + H(+). Hydrolyzes ribosome-free peptidyl-tRNAs (with 1 or more amino acids incorporated), which drop off the ribosome during protein synthesis, or as a result of ribosome stalling. In terms of biological role, catalyzes the release of premature peptidyl moieties from peptidyl-tRNA molecules trapped in stalled 50S ribosomal subunits, and thus maintains levels of free tRNAs and 50S ribosomes. This chain is Peptidyl-tRNA hydrolase, found in Latilactobacillus sakei subsp. sakei (strain 23K) (Lactobacillus sakei subsp. sakei).